The sequence spans 93 residues: Pyrimidine/purine nucleoside phosphorylase (93 aa).

Belongs to the nucleoside phosphorylase PpnP family.

The enzyme catalyses a purine D-ribonucleoside + phosphate = a purine nucleobase + alpha-D-ribose 1-phosphate. It carries out the reaction adenosine + phosphate = alpha-D-ribose 1-phosphate + adenine. It catalyses the reaction cytidine + phosphate = cytosine + alpha-D-ribose 1-phosphate. The catalysed reaction is guanosine + phosphate = alpha-D-ribose 1-phosphate + guanine. The enzyme catalyses inosine + phosphate = alpha-D-ribose 1-phosphate + hypoxanthine. It carries out the reaction thymidine + phosphate = 2-deoxy-alpha-D-ribose 1-phosphate + thymine. It catalyses the reaction uridine + phosphate = alpha-D-ribose 1-phosphate + uracil. The catalysed reaction is xanthosine + phosphate = alpha-D-ribose 1-phosphate + xanthine. Functionally, catalyzes the phosphorolysis of diverse nucleosides, yielding D-ribose 1-phosphate and the respective free bases. Can use uridine, adenosine, guanosine, cytidine, thymidine, inosine and xanthosine as substrates. Also catalyzes the reverse reactions. This chain is Pyrimidine/purine nucleoside phosphorylase, found in Sorangium cellulosum (strain So ce56) (Polyangium cellulosum (strain So ce56)).